The chain runs to 193 residues: Epididymal-specific lipocalin-12 (193 aa).

A signal peptide spans 1–19 (MGPWWALWLILTLPQILES). The cysteines at positions 88 and 193 are disulfide-linked. Asn143 and Asn172 each carry an N-linked (GlcNAc...) asparagine glycan.

It belongs to the calycin superfamily. Lipocalin family. Monomer. Expressed in epididymis.

The protein localises to the secreted. Functionally, binds all-trans retinoic acid and may act as a retinoid carrier protein within the epididymis. May play a role in male fertility. The protein is Epididymal-specific lipocalin-12 (Lcn12) of Mus musculus (Mouse).